The following is a 443-amino-acid chain: MVLDNLGKALANTLKKIARASSVDEALIKELVRDIQRALIQADVNVRLVLQLTREIQRRALEEKPPAGISKKEHIIKIVYEELTKFLGTEAKPIEIKEKPTILLMVGIQGSGKTTTVAKLARYFQKRGYKVGVVCSDTWRPGAYHQLRQLLDRYHIEVFGNPQEKDAIKLAKEGVDYFKSKGVDIIIVDTAGRHKEDKALIEEMKQISNVIHPHEVILVIDGTIGQQAYNQALAFKEATPIGSIIVTKLDGSAKGGGALSAVAATGAPIKFIGTGEKIDDIEPFDPPRFVSRLLGLGDIQGLLEKFKELEKEVEIKEEDIERFLRGKFTLKDMYAQLEAMRKMGPLKQILRMIPGLGYSLPDDVISIGEERLKKFKVIMDSMTEEELLNPEIINYSRIKRIARGSGTSTKDVKELLDQYRQMKKLFKSMNKRQLSRLARRFGM.

GTP is bound by residues 107-114 (GIQGSGKT), 189-193 (DTAGR), and 247-250 (TKLD).

Belongs to the GTP-binding SRP family. SRP54 subfamily. In terms of assembly, part of the signal recognition particle protein translocation system, which is composed of SRP and FtsY. Archaeal SRP consists of a 7S RNA molecule of 300 nucleotides and two protein subunits: SRP54 and SRP19.

It localises to the cytoplasm. The enzyme catalyses GTP + H2O = GDP + phosphate + H(+). Functionally, involved in targeting and insertion of nascent membrane proteins into the cytoplasmic membrane. Binds to the hydrophobic signal sequence of the ribosome-nascent chain (RNC) as it emerges from the ribosomes. The SRP-RNC complex is then targeted to the cytoplasmic membrane where it interacts with the SRP receptor FtsY. The sequence is that of Signal recognition particle 54 kDa protein from Pyrococcus furiosus (strain ATCC 43587 / DSM 3638 / JCM 8422 / Vc1).